Here is a 214-residue protein sequence, read N- to C-terminus: tRNA (guanine-N(7)-)-methyltransferase (214 aa).

4 residues coordinate S-adenosyl-L-methionine: glutamate 44, glutamate 69, aspartate 96, and aspartate 118. Aspartate 118 is an active-site residue. Substrate contacts are provided by residues lysine 122, aspartate 154, and threonine 191–glutamate 194.

Belongs to the class I-like SAM-binding methyltransferase superfamily. TrmB family.

It carries out the reaction guanosine(46) in tRNA + S-adenosyl-L-methionine = N(7)-methylguanosine(46) in tRNA + S-adenosyl-L-homocysteine. It functions in the pathway tRNA modification; N(7)-methylguanine-tRNA biosynthesis. Catalyzes the formation of N(7)-methylguanine at position 46 (m7G46) in tRNA. This chain is tRNA (guanine-N(7)-)-methyltransferase, found in Listeria monocytogenes serovar 1/2a (strain ATCC BAA-679 / EGD-e).